Consider the following 101-residue polypeptide: Large ribosomal subunit protein uL23 (101 aa).

It belongs to the universal ribosomal protein uL23 family. In terms of assembly, part of the 50S ribosomal subunit. Contacts protein L29, and trigger factor when it is bound to the ribosome.

One of the early assembly proteins it binds 23S rRNA. One of the proteins that surrounds the polypeptide exit tunnel on the outside of the ribosome. Forms the main docking site for trigger factor binding to the ribosome. The chain is Large ribosomal subunit protein uL23 from Rhodococcus jostii (strain RHA1).